We begin with the raw amino-acid sequence, 288 residues long: Cyclic UMP-AMP synthase (288 aa).

The disordered stretch occupies residues 1–23 (MPVPESQLERWSHQGATTTAKKT). Q46 lines the UTP pocket. 46–48 (QGS) provides a ligand contact to ATP. Mg(2+)-binding residues include D60 and D62. Residues D62 and 116 to 120 (RKTLK) each bind UTP. D129 lines the Mg(2+) pocket. N166 provides a ligand contact to UTP. Positions 194, 212, and 265 each coordinate ATP.

Belongs to the CD-NTase family. E01 subfamily. It depends on Mg(2+) as a cofactor.

It carries out the reaction UTP + ATP = 3',3'-cUAMP + 2 diphosphate. Its function is as follows. Cyclic nucleotide synthase (second messenger synthase) of a CBASS antivirus system. CBASS (cyclic oligonucleotide-based antiphage signaling system) provides immunity against bacteriophage. The CD-NTase protein synthesizes cyclic nucleotides in response to infection; these serve as specific second messenger signals. The signals activate a diverse range of effectors, leading to bacterial cell death and thus abortive phage infection. A type I-B(UU) CBASS system. Cyclic dinucleotide synthase that catalyzes the synthesis of 3'3'-cyclic UMP-AMP (cUMP-AMP) from UTP and ATP, a second messenger for cell signal transduction. The chain is Cyclic UMP-AMP synthase from Rhodothermus marinus (strain SG0.5JP17-172).